The chain runs to 658 residues: Glycogen debranching enzyme (658 aa).

The active-site Nucleophile is aspartate 335. The Proton donor role is filled by glutamate 370. Basic and acidic residues predominate over residues 457 to 468 (NDANGEGNRDGT). The disordered stretch occupies residues 457–478 (NDANGEGNRDGTDSNFSNNHGT).

Belongs to the glycosyl hydrolase 13 family.

It carries out the reaction Hydrolysis of (1-&gt;6)-alpha-D-glucosidic linkages to branches with degrees of polymerization of three or four glucose residues in limit dextrin.. It functions in the pathway glycan degradation; glycogen degradation. Functionally, removes maltotriose and maltotetraose chains that are attached by 1,6-alpha-linkage to the limit dextrin main chain, generating a debranched limit dextrin. In Pectobacterium carotovorum subsp. carotovorum (strain PC1), this protein is Glycogen debranching enzyme.